We begin with the raw amino-acid sequence, 173 residues long: Endosomal/vacuolar adapter protein YPT35 (173 aa).

Residues 40–173 enclose the PX domain; sequence ERAFVTNCTI…LVIQFLRPRK (134 aa).

The protein belongs to the YPT35 family.

The protein localises to the endosome membrane. Its subcellular location is the vacuole membrane. In terms of biological role, recruits the lipid transfer protein VPS13 to endosomal and vacuolar membranes. This is Endosomal/vacuolar adapter protein YPT35 (YPT35) from Candida glabrata (strain ATCC 2001 / BCRC 20586 / JCM 3761 / NBRC 0622 / NRRL Y-65 / CBS 138) (Yeast).